Reading from the N-terminus, the 270-residue chain is F420 non-reducing hydrogenase II cytochrome subunit (270 aa).

5 consecutive transmembrane segments (helical) span residues 27 to 47 (AIAM…WEFM), 57 to 77 (MIAV…NIFS), 139 to 159 (ILIP…IVLY), 173 to 193 (WIIS…VGFL), and 195 to 215 (VLHL…VGIL).

It belongs to the HupC/HyaC/HydC family. As to quaternary structure, composed of a large subunit (VhtA), a small subunit (VhtG) and a cytochrome subunit (VhtC). The cofactor is heme b.

Its subcellular location is the cell membrane. It carries out the reaction methanophenazine + H2 = dihydromethanophenazine. Its function is as follows. Part of the F420 non-reducing hydrogenase II complex that catalyzes the reduction of methanophenazine to dihydromethanophenazine. In Methanosarcina mazei (strain ATCC BAA-159 / DSM 3647 / Goe1 / Go1 / JCM 11833 / OCM 88) (Methanosarcina frisia), this protein is F420 non-reducing hydrogenase II cytochrome subunit.